Consider the following 261-residue polypeptide: Imidazole glycerol phosphate synthase subunit HisF (261 aa).

Active-site residues include D16 and D135.

This sequence belongs to the HisA/HisF family. Heterodimer of HisH and HisF.

It is found in the cytoplasm. It carries out the reaction 5-[(5-phospho-1-deoxy-D-ribulos-1-ylimino)methylamino]-1-(5-phospho-beta-D-ribosyl)imidazole-4-carboxamide + L-glutamine = D-erythro-1-(imidazol-4-yl)glycerol 3-phosphate + 5-amino-1-(5-phospho-beta-D-ribosyl)imidazole-4-carboxamide + L-glutamate + H(+). The protein operates within amino-acid biosynthesis; L-histidine biosynthesis; L-histidine from 5-phospho-alpha-D-ribose 1-diphosphate: step 5/9. IGPS catalyzes the conversion of PRFAR and glutamine to IGP, AICAR and glutamate. The HisF subunit catalyzes the cyclization activity that produces IGP and AICAR from PRFAR using the ammonia provided by the HisH subunit. In Mycolicibacterium gilvum (strain PYR-GCK) (Mycobacterium gilvum (strain PYR-GCK)), this protein is Imidazole glycerol phosphate synthase subunit HisF.